Consider the following 164-residue polypeptide: General odorant-binding protein 1 (164 aa).

The signal sequence occupies residues 1-18 (MWKLVVVLTVNLLQGALT). 3 cysteine pairs are disulfide-bonded: cysteine 37-cysteine 72, cysteine 68-cysteine 126, and cysteine 115-cysteine 135.

Belongs to the PBP/GOBP family. As to quaternary structure, homodimer. Antenna.

In terms of biological role, present in the aqueous fluid surrounding olfactory sensory dendrites and are thought to aid in the capture and transport of hydrophobic odorants into and through this fluid. The protein is General odorant-binding protein 1 of Bombyx mori (Silk moth).